Here is a 475-residue protein sequence, read N- to C-terminus: Tubulin epsilon chain (475 aa).

Residue 148 to 154 (GGGTGSG) coordinates GTP.

This sequence belongs to the tubulin family. Found in a complex with TEDC1, TEDC2, TUBE1 and TUBD1.

It localises to the cytoplasm. The protein localises to the cytoskeleton. The protein resides in the microtubule organizing center. Its subcellular location is the centrosome. This is Tubulin epsilon chain (TUBE1) from Homo sapiens (Human).